The primary structure comprises 89 residues: Large ribosomal subunit protein bL27 (89 aa).

Positions 1 to 22 (MAHKKAGGSSRNGRDSESKRLG) are disordered.

The protein belongs to the bacterial ribosomal protein bL27 family.

The protein is Large ribosomal subunit protein bL27 of Rhizobium etli (strain CIAT 652).